A 212-amino-acid polypeptide reads, in one-letter code: Nuclear phosphoprotein UL3 homolog (212 aa).

The protein belongs to the alphaherpesvirinae HHV-1 UL3 family. Phosphorylated.

Its subcellular location is the host nucleus. The polypeptide is Nuclear phosphoprotein UL3 homolog (Equus caballus (Horse)).